We begin with the raw amino-acid sequence, 75 residues long: Tautomerase PptA (75 aa).

Catalysis depends on P2, which acts as the Proton acceptor; via imino nitrogen.

It belongs to the 4-oxalocrotonate tautomerase family. PptA subfamily. Homodimer.

Its subcellular location is the cytoplasm. In Klebsiella pneumoniae subsp. pneumoniae (strain ATCC 700721 / MGH 78578), this protein is Tautomerase PptA.